Consider the following 299-residue polypeptide: HTH-type transcriptional repressor CarH (299 aa).

An HTH merR-type domain is found at 5–74 (TYRINIAAEL…ISEAAKLLPQ (70 aa)). The segment at residues 8–27 (INIAAELAGVRVELIRAWER) is a DNA-binding region (H-T-H motif). The 120-residue stretch at 180-299 (HRHGVLACFP…EEDWDRLAGT (120 aa)) folds into the B12-binding domain.

This sequence belongs to the CarA/CarH B12-binding photoregulator family. Forms oligomers. Interacts with CarS.

Its activity is regulated as follows. Requires cobalamin (vitamin B12) for repressor activity. In the dark, binding of cobalamin to CarH induces its oligomerization, which enhances binding to the DNA and repressor activity. Light causes cobalamin photolysis and disruption of the cobalamin-CarH complex, which decreases interaction with DNA and allows transcription of the carB operon. Interaction with CarS also prevents binding to DNA. Functionally, negative regulator of the carB operon in the dark. Binds specifically to the CarA operator, in the region around the carB promoter, which blocks access to the RNA polymerase. The sequence is that of HTH-type transcriptional repressor CarH (carH) from Myxococcus xanthus.